The following is a 958-amino-acid chain: Glycine dehydrogenase (decarboxylating) (958 aa).

N6-(pyridoxal phosphate)lysine is present on Lys703.

Belongs to the GcvP family. In terms of assembly, the glycine cleavage system is composed of four proteins: P, T, L and H. Pyridoxal 5'-phosphate serves as cofactor.

The catalysed reaction is N(6)-[(R)-lipoyl]-L-lysyl-[glycine-cleavage complex H protein] + glycine + H(+) = N(6)-[(R)-S(8)-aminomethyldihydrolipoyl]-L-lysyl-[glycine-cleavage complex H protein] + CO2. The glycine cleavage system catalyzes the degradation of glycine. The P protein binds the alpha-amino group of glycine through its pyridoxal phosphate cofactor; CO(2) is released and the remaining methylamine moiety is then transferred to the lipoamide cofactor of the H protein. This Nitrobacter hamburgensis (strain DSM 10229 / NCIMB 13809 / X14) protein is Glycine dehydrogenase (decarboxylating).